A 203-amino-acid polypeptide reads, in one-letter code: Small ribosomal subunit protein uS5 (203 aa).

A compositionally biased stretch (basic and acidic residues) spans 1–18 (MENNVKKETIVDSEKVEK). Residues 1-36 (MENNVKKETIVDSEKVEKQQPVTAPVVNKKENTQPK) are disordered. The region spanning 49-112 (FEERVVKIKR…KNANNNLIKV (64 aa)) is the S5 DRBM domain.

Belongs to the universal ribosomal protein uS5 family. Part of the 30S ribosomal subunit. Contacts proteins S4 and S8.

With S4 and S12 plays an important role in translational accuracy. In terms of biological role, located at the back of the 30S subunit body where it stabilizes the conformation of the head with respect to the body. The sequence is that of Small ribosomal subunit protein uS5 from Ureaplasma urealyticum serovar 10 (strain ATCC 33699 / Western).